A 378-amino-acid chain; its full sequence is Lysocardiolipin acyltransferase 1 (378 aa).

2 helical membrane-spanning segments follow: residues 9–29 and 46–66; these read FVVA…GPFL and IVAT…GAKV. An HXXXXD motif motif is present at residues 85 to 90; sequence HRTRMD. The next 2 helical transmembrane spans lie at 302–322 and 336–358; these read LRVL…PMGT and FAAM…LIEL.

Belongs to the 1-acyl-sn-glycerol-3-phosphate acyltransferase family.

It is found in the endoplasmic reticulum membrane. The catalysed reaction is a 1-acyl-sn-glycero-3-phosphate + an acyl-CoA = a 1,2-diacyl-sn-glycero-3-phosphate + CoA. The enzyme catalyses a 1-acyl-sn-glycero-3-phospho-(1D-myo-inositol) + an acyl-CoA = a 1,2-diacyl-sn-glycero-3-phospho-(1D-myo-inositol) + CoA. It carries out the reaction 1-acyl-sn-glycero-3-phospho-(1'-sn-glycerol) + an acyl-CoA = a 1,2-diacyl-sn-glycero-3-phospho-(1'-sn-glycerol) + CoA. It catalyses the reaction 1-hexadecanoyl-sn-glycero-3-phosphate + (9Z)-octadecenoyl-CoA = 1-hexadecanoyl-2-(9Z-octadecenoyl)-sn-glycero-3-phosphate + CoA. The catalysed reaction is 1-(9Z-octadecenoyl)-sn-glycero-3-phosphate + (9Z)-octadecenoyl-CoA = 1,2-di-(9Z-octadecenoyl)-sn-glycero-3-phosphate + CoA. The enzyme catalyses 1-(9Z,12Z)-octadecadienoyl-sn-glycero-3-phosphate + (9Z)-octadecenoyl-CoA = 1-(9Z,12Z)-octadecadienoyl-2-(9Z)-octadecenoyl-sn-glycero-3-phosphate + CoA. It carries out the reaction 1-(9Z,12Z,15Z)-octadecatrienoyl-sn-glycero-3-phosphate + (9Z)-octadecenoyl-CoA = 1-(9Z,12Z,15Z)-octadecatrienoyl-2-(9Z)-octadecenoyl-sn-glycero-3-phosphate + CoA. It catalyses the reaction 1-(9Z-octadecenoyl)-sn-glycero-3-phosphate + hexadecanoyl-CoA = 1-(9Z)-octadecenoyl-2-hexadecanoyl-sn-glycero-3-phosphate + CoA. The catalysed reaction is 1-(9Z-octadecenoyl)-sn-glycero-3-phosphate + octadecanoyl-CoA = 1-(9Z-octadecenoyl)-2-octadecanoyl-sn-glycero-3-phosphate + CoA. The enzyme catalyses 1-acyl-sn-glycero-3-phospho-(1'-sn-glycerol) + (9Z)-octadecenoyl-CoA = 1-acyl-2-(9Z-octadecenoyl)-sn-glycero-3-phospho-(1'-sn-glycerol) + CoA. It carries out the reaction a 1-acyl-sn-glycero-3-phospho-(1D-myo-inositol) + (9Z)-octadecenoyl-CoA = a 1-acyl-2-(9Z-octadecenoyl)-sn-glycero-3-phospho-(1D-myo-inositol) + CoA. It catalyses the reaction 1-hexadecanoyl-sn-glycero-3-phospho-(1D-myo-inositol) + hexadecanoyl-CoA = 1,2-dihexadecanoyl-sn-glycero-3-phospho-(1D-myo-inositol) + CoA. The catalysed reaction is 1-hexadecanoyl-sn-glycero-3-phospho-(1D-myo-inositol) + octadecanoyl-CoA = 1-hexadecanoyl-2-octadecanoyl-sn-glycero-3-phospho-(1D-myo-inositol) + CoA. The enzyme catalyses 1-hexadecanoyl-sn-glycero-3-phospho-(1D-myo-inositol) + (9Z)-octadecenoyl-CoA = 1-hexadecanoyl-2-(9Z-octadecenoyl)-sn-glycero-3-phospho-(1D-myo-inositol) + CoA. It carries out the reaction 1-hexadecanoyl-sn-glycero-3-phospho-(1D-myo-inositol) + (9Z,12Z)-octadecadienoyl-CoA = 1-hexadecanoyl-2-(9Z,12Z-octadecadienoyl)-sn-glycero-3-phospho-(1D-myo-inositol) + CoA. It catalyses the reaction 1-hexadecanoyl-sn-glycero-3-phospho-(1D-myo-inositol) + (5Z,8Z,11Z,14Z)-eicosatetraenoyl-CoA = 1-hexadecanoyl-2-(5Z,8Z,11Z,14Z-eicosatetraenoyl)-sn-glycero-3-phospho-D-myo-inositol + CoA. The catalysed reaction is 1-hexadecanoyl-sn-glycero-3-phospho-(1'-sn-glycerol) + hexadecanoyl-CoA = 1,2-dihexadecanoyl-sn-glycero-3-phospho-(1'-sn-glycerol) + CoA. The enzyme catalyses 1-hexadecanoyl-sn-glycero-3-phospho-(1'-sn-glycerol) + octadecanoyl-CoA = 1-hexadecanoyl-2-octadecanoyl-sn-glycero-3-phospho-(1'-sn-glycerol) + CoA. It carries out the reaction 1-hexadecanoyl-sn-glycero-3-phospho-(1'-sn-glycerol) + (9Z)-octadecenoyl-CoA = 1-hexadecanoyl-2-(9Z-octadecenoyl)-sn-glycero-3-phospho-(1'-sn-glycerol) + CoA. It catalyses the reaction 1-hexadecanoyl-sn-glycero-3-phospho-(1'-sn-glycerol) + (9Z,12Z)-octadecadienoyl-CoA = 1-hexadecanoyl-2-(9Z,12Z-octadecadienoyl)-sn-glycero-3-phospho-(1'-sn-glycerol) + CoA. The catalysed reaction is 1-tetradecanoyl-sn-glycero-3-phospho-(1'-sn-glycerol) + (9Z)-octadecenoyl-CoA = 1-tetradecanoyl-2-(9Z-octadecenoyl)-sn-glycero-3-phospho-(1'-sn-glycerol) + CoA. The enzyme catalyses 1-octadecanoyl-sn-glycero-3-phospho-(1'-sn-glycerol) + (9Z)-octadecenoyl-CoA = 1-octadecanoyl-2-(9Z-octadecenoyl)-sn-glycero-3-phospho-(1'-sn-glycerol) + CoA. It carries out the reaction 1-(9Z-octadecenoyl)-sn-glycero-3-phospho-(1'-sn-glycerol) + (9Z)-octadecenoyl-CoA = 1,2-di-(9Z-octadecenoyl)-sn-glycero-3-phospho-(1'-sn-glycerol) + CoA. It catalyses the reaction 1-hexadecanoyl-sn-glycero-3-phospho-(1D-myo-inositol) + dodecanoyl-CoA = 1-hexadecanoyl-2-dodecanoyl-sn-glycero-3-phospho-(1D-myo-inositol) + CoA. The catalysed reaction is 1',3'-bis-[1-acyl-sn-glycero-3-phospho]-glycerol + (9Z)-octadecenoyl-CoA = 1'-[1-acyl-2-(9Z)-octadecenoyl-sn-glycero-3-phospho],3'-[1-acyl,2-hydroxy-sn-glycero-3-phospho]-glycerol + CoA. The enzyme catalyses 1'-[1,2-diacyl-sn-glycero-3-phospho],3'-[1-acyl-sn-glycero-3-phospho]-glycerol + (9Z)-octadecenoyl-CoA = 1'-[1,2-diacyl-sn-glycero-3-phospho],3'-[1-acyl,2-(9Z)-octadecenoyl-sn-glycero-3-phospho]-glycerol + CoA. It carries out the reaction 1'-[1,2-diacyl-sn-glycero-3-phospho],3'-[1-acyl-sn-glycero-3-phospho]-glycerol + (9Z,12Z)-octadecadienoyl-CoA = 1'-[1,2-diacyl-sn-glycero-3-phospho],3'-[1-acyl,2-(9Z,12Z)-octadecadienoyl-sn-glycero-3-phospho]-glycerol + CoA. It catalyses the reaction 1'-[1,2-diacyl-sn-glycero-3-phospho],3'-[1-acyl-sn-glycero-3-phospho]-glycerol + dodecanoyl-CoA = 1'-[1,2-diacyl-sn-glycero-3-phospho],3'-[1-acyl,2-dodecanoyl-sn-glycero-3-phospho]-glycerol + CoA. The catalysed reaction is 1',3'-bis-[1-acyl-sn-glycero-3-phospho]-glycerol + dodecanoyl-CoA = 1'-[1-acyl-2-dodecanoyl-sn-glycero-3-phospho],3'-[1-acyl,2-hydroxy-sn-glycero-3-phospho]-glycerol + CoA. The enzyme catalyses a 1-acyl-sn-glycero-3-phosphate + (9Z)-octadecenoyl-CoA = a 1-acyl-2-(9Z-octadecenoyl)-sn-glycero-3-phosphate + CoA. It carries out the reaction 1',3'-bis-[1-acyl-sn-glycero-3-phospho]-glycerol + (9Z,12Z)-octadecadienoyl-CoA = 1'-[1-acyl-2-(9Z,12Z)-octadecadienoyl-sn-glycero-3-phospho],3'-[1-acyl,2-hydroxy-sn-glycero-3-phospho]-glycerol + CoA. It catalyses the reaction 1',3'-bis-[1-acyl-sn-glycero-3-phospho]-glycerol + hexadecanoyl-CoA = 1'-[1-acyl-2-hexadecanoyl-sn-glycero-3-phospho],3'-[1-acyl,2-hydroxy-sn-glycero-3-phospho]-glycerol + CoA. The catalysed reaction is 1',3'-bis-[1-acyl-sn-glycero-3-phospho]-glycerol + octadecanoyl-CoA = 1'-[1-acyl-2-octadecanoyl-sn-glycero-3-phospho],3'-[1-acyl,2-hydroxy-sn-glycero-3-phospho]-glycerol + CoA. The enzyme catalyses 1'-[1,2-diacyl-sn-glycero-3-phospho],3'-[1-acyl-sn-glycero-3-phospho]-glycerol + octanoyl-CoA = 1'-[1,2-diacyl-sn-glycero-3-phospho],3'-[1-acyl,2-octanoyl-sn-glycero-3-phospho]-glycerol + CoA. It carries out the reaction 1',3'-bis-[1-acyl-sn-glycero-3-phospho]-glycerol + octanoyl-CoA = 1'-[1-acyl-2-octanoyl-sn-glycero-3-phospho],3'-[1-acyl,2-hydroxy-sn-glycero-3-phospho]-glycerol + CoA. It catalyses the reaction 1'-[1,2-diacyl-sn-glycero-3-phospho],3'-[1-acyl-sn-glycero-3-phospho]-glycerol + hexadecanoyl-CoA = 1'-[1,2-diacyl-sn-glycero-3-phospho],3'-[1-acyl,2-hexadecanoyl-sn-glycero-3-phospho]-glycerol + CoA. The catalysed reaction is 1'-[1,2-diacyl-sn-glycero-3-phospho],3'-[1-acyl-sn-glycero-3-phospho]-glycerol + (5Z,8Z,11Z,14Z)-eicosatetraenoyl-CoA = 1'-[1,2-diacyl-sn-glycero-3-phospho],3'-[1-acyl,2-(5Z,8Z,11Z,14Z)-eicosatetraenoyl-sn-glycero-3-phospho]-glycerol + CoA. The enzyme catalyses 1',3'-bis-[1-acyl-sn-glycero-3-phospho]-glycerol + (5Z,8Z,11Z,14Z)-eicosatetraenoyl-CoA = 1'-[1-acyl-2-(5Z,8Z,11Z,14Z)-eicosatetraenoyl-sn-glycero-3-phospho],3'-[1-acyl,2-hydroxy-sn-glycero-3-phospho]-glycerol + CoA. It carries out the reaction a 1-acyl-sn-glycero-3-phospho-(1D-myo-inositol) + octadecanoyl-CoA = a 1-acyl-2-octadecanoyl-sn-glycero-3-phospho-(1D-myo-inositol) + CoA. It catalyses the reaction a 2-acyl-sn-glycero-3-phospho-D-myo-inositol + octadecanoyl-CoA = 1-octadecanoyl-2-acyl-sn-glycero-3-phospho-1D-myo-inositol + CoA. It participates in phospholipid metabolism; CDP-diacylglycerol biosynthesis; CDP-diacylglycerol from sn-glycerol 3-phosphate: step 2/3. Its function is as follows. Exhibits acyl-CoA:lysocardiolipin acyltransferase (ALCAT) activity; catalyzes the reacylation of lyso-cardiolipin to cardiolipin (CL), a key step in CL remodeling. Recognizes both monolysocardiolipin and dilysocardiolipin as substrates with a preference for linoleoyl-CoA and oleoyl-CoA as acyl donors. Also exhibits 1-acyl-sn-glycerol-3-phosphate acyltransferase activity (AGPAT) activity; converts 1-acyl-sn-glycerol-3- phosphate (lysophosphatidic acid or LPA) into 1,2-diacyl-sn-glycerol-3- phosphate (phosphatidic acid or PA) by incorporating an acyl moiety at the sn-2 position of the glycerol backbone. Possesses both lysophosphatidylinositol acyltransferase (LPIAT) and lysophosphatidylglycerol acyltransferase (LPGAT) activities. Required for establishment of the hematopoietic and endothelial lineages. The protein is Lysocardiolipin acyltransferase 1 (LCLAT1) of Gallus gallus (Chicken).